The chain runs to 162 residues: Large ribosomal subunit protein uL10 (162 aa).

Belongs to the universal ribosomal protein uL10 family. As to quaternary structure, part of the ribosomal stalk of the 50S ribosomal subunit. The N-terminus interacts with L11 and the large rRNA to form the base of the stalk. The C-terminus forms an elongated spine to which L12 dimers bind in a sequential fashion forming a multimeric L10(L12)X complex.

Its function is as follows. Forms part of the ribosomal stalk, playing a central role in the interaction of the ribosome with GTP-bound translation factors. This chain is Large ribosomal subunit protein uL10, found in Phytoplasma mali (strain AT).